A 427-amino-acid chain; its full sequence is MSDRMSLSLAQSDPDVAAAIDHEVLRQHEGLEMIASENFVSRAVLEAAGSVFTNKYAEGYPGRRYYGGCEFADVVENLARDRAKQLFGAEHANVQPHSGSQANAAAYMSIIQPGDTILGLDLAHGGHLTHGHKLNFSGKLYRVASYGVRKDTETIDYDELEAIAVREQPKMIIGGGSAYPRIFDFARMRQIADKVGAFLLVDMAHFAGLVAGGAHPSPVPHAHIVTTTTHKTLRGPRSGLILCRQEHAAAVDKSVFPGQQGGPLVHIMAAKAVAFREALQPDFSKYAQQIVDNARALAAALAGHGYRIISGGTDTHLMLIDVFAKGILGSEAEAALGKAGITVNKNAIPYDTNPPLKPSGIRIGTPALTTRGMKEAEMKQIAQWIVSALEHRNNESMLERIHGEVTEMANQFPLYGWLREDAEALAR.

Residues L122 and 126–128 (GHL) contribute to the (6S)-5,6,7,8-tetrahydrofolate site. K231 carries the N6-(pyridoxal phosphate)lysine modification.

It belongs to the SHMT family. In terms of assembly, homodimer. Requires pyridoxal 5'-phosphate as cofactor.

It is found in the cytoplasm. The enzyme catalyses (6R)-5,10-methylene-5,6,7,8-tetrahydrofolate + glycine + H2O = (6S)-5,6,7,8-tetrahydrofolate + L-serine. Its pathway is one-carbon metabolism; tetrahydrofolate interconversion. It participates in amino-acid biosynthesis; glycine biosynthesis; glycine from L-serine: step 1/1. Its function is as follows. Catalyzes the reversible interconversion of serine and glycine with tetrahydrofolate (THF) serving as the one-carbon carrier. This reaction serves as the major source of one-carbon groups required for the biosynthesis of purines, thymidylate, methionine, and other important biomolecules. Also exhibits THF-independent aldolase activity toward beta-hydroxyamino acids, producing glycine and aldehydes, via a retro-aldol mechanism. This chain is Serine hydroxymethyltransferase, found in Acidobacterium capsulatum (strain ATCC 51196 / DSM 11244 / BCRC 80197 / JCM 7670 / NBRC 15755 / NCIMB 13165 / 161).